Reading from the N-terminus, the 399-residue chain is MGFLSSAILLLITAFPAAQAGEMINAAAGATDVIPDSYIVVMNEGISESDFESHRTWATSMNSKSRKRAGAFSGVSRTWSATGMKGYSGSFARETIEQIANNSAVAYVEPDRMVNITAFVTQRNAPSYGLGRISNKRPGNRDYIFDESAGRGITIYGVDTGIDIRHPEFEGRATWGTNEINDVNQDENGHGTHTAGTFAGRNFGVAKRANIVAVKVLNAEGSGSTSGIISGINWCVDHARRNNILGRAVMNLSLGGTGARAFNQVATNAANAGIFLAVAAGNDGEDAANTSPASARGVCTVSASTERDTRADFSNFGSVVDIYAPGDQIPSVFPNNARRVLSGTSMAAPHVAGVGAYLMALEGISSGQVCNRIKRLSQPRIRNPGRDTTNRLLYNNSGV.

An N-terminal signal peptide occupies residues 1–20 (MGFLSSAILLLITAFPAAQA). Positions 21-117 (GEMINAAAGA…VEPDRMVNIT (97 aa)) are excised as a propeptide. An Inhibitor I9 domain is found at 37-116 (SYIVVMNEGI…YVEPDRMVNI (80 aa)). A glycan (N-linked (GlcNAc...) asparagine) is linked at Asn-115. In terms of domain architecture, Peptidase S8 spans 127–399 (SYGLGRISNK…NRLLYNNSGV (273 aa)). Catalysis depends on charge relay system residues Asp-159 and His-190. Residue Asn-251 is glycosylated (N-linked (GlcNAc...) asparagine). Residue Ser-345 is the Charge relay system of the active site. An N-linked (GlcNAc...) asparagine glycan is attached at Asn-395.

It belongs to the peptidase S8 family.

Its subcellular location is the secreted. Functionally, secreted subtilisin-like serine protease with keratinolytic activity that contributes to pathogenicity. The protein is Subtilisin-like protease CPC735_033790 of Coccidioides posadasii (strain C735) (Valley fever fungus).